Here is an 848-residue protein sequence, read N- to C-terminus: Translation initiation factor IF-2 (848 aa).

A disordered region spans residues 1–265; sequence MSDTDGKKPL…GNQRAEKQVR (265 aa). A compositionally biased stretch (basic and acidic residues) spans 89–162; the sequence is KAREVEEAAQ…AEIAKPKTEA (74 aa). Low complexity predominate over residues 163-179; it reads RPATPADRAAAEAAAVR. Basic and acidic residues predominate over residues 191 to 219; sequence RKTDRDRDTRGGGGDDRDSRNKGRDDSRR. The tr-type G domain occupies 346–514; sequence PRAPIITIMG…AIALQAEILE (169 aa). The segment at 355–362 is G1; the sequence is GHVDHGKT. Residue 355-362 participates in GTP binding; that stretch reads GHVDHGKT. The G2 stretch occupies residues 380–384; the sequence is GITQH. A G3 region spans residues 402–405; it reads DTPG. Residues 402-406 and 456-459 each bind GTP; these read DTPGH and NKID. Residues 456–459 are G4; it reads NKID. A G5 region spans residues 492–494; it reads SAK.

This sequence belongs to the TRAFAC class translation factor GTPase superfamily. Classic translation factor GTPase family. IF-2 subfamily.

The protein resides in the cytoplasm. In terms of biological role, one of the essential components for the initiation of protein synthesis. Protects formylmethionyl-tRNA from spontaneous hydrolysis and promotes its binding to the 30S ribosomal subunits. Also involved in the hydrolysis of GTP during the formation of the 70S ribosomal complex. In Paracoccus denitrificans (strain Pd 1222), this protein is Translation initiation factor IF-2.